The chain runs to 848 residues: Leucine--tRNA ligase (848 aa).

Residues 41 to 51 (PYPSGRIHMGH) carry the 'HIGH' region motif. Positions 619–623 (KMSKS) match the 'KMSKS' region motif. Lys-622 is an ATP binding site.

Belongs to the class-I aminoacyl-tRNA synthetase family.

It localises to the cytoplasm. The enzyme catalyses tRNA(Leu) + L-leucine + ATP = L-leucyl-tRNA(Leu) + AMP + diphosphate. The polypeptide is Leucine--tRNA ligase (Roseobacter denitrificans (strain ATCC 33942 / OCh 114) (Erythrobacter sp. (strain OCh 114))).